Consider the following 444-residue polypeptide: N-succinylarginine dihydrolase (444 aa).

Residues 19 to 28, Asn110, and 137 to 138 contribute to the substrate site; these read SGLSFGNVAS and HR. The active site involves Glu174. Substrate is bound at residue Arg214. His250 is an active-site residue. Asp252 and Asn362 together coordinate substrate. Residue Cys368 is the Nucleophile of the active site.

The protein belongs to the succinylarginine dihydrolase family. Homodimer.

The enzyme catalyses N(2)-succinyl-L-arginine + 2 H2O + 2 H(+) = N(2)-succinyl-L-ornithine + 2 NH4(+) + CO2. It functions in the pathway amino-acid degradation; L-arginine degradation via AST pathway; L-glutamate and succinate from L-arginine: step 2/5. Catalyzes the hydrolysis of N(2)-succinylarginine into N(2)-succinylornithine, ammonia and CO(2). The sequence is that of N-succinylarginine dihydrolase from Photobacterium profundum (strain SS9).